The chain runs to 486 residues: Ribulose bisphosphate carboxylase large chain, plasmid (486 aa).

Residues Asn-126 and Thr-176 each coordinate substrate. Catalysis depends on Lys-178, which acts as the Proton acceptor. Lys-180 contacts substrate. Mg(2+) contacts are provided by Lys-204, Asp-206, and Glu-207. Position 204 is an N6-carboxylysine (Lys-204). His-296 serves as the catalytic Proton acceptor. Substrate contacts are provided by Arg-297, His-329, and Ser-381.

The protein belongs to the RuBisCO large chain family. Type I subfamily. Heterohexadecamer of 8 large chains and 8 small chains. It depends on Mg(2+) as a cofactor.

It catalyses the reaction 2 (2R)-3-phosphoglycerate + 2 H(+) = D-ribulose 1,5-bisphosphate + CO2 + H2O. The enzyme catalyses D-ribulose 1,5-bisphosphate + O2 = 2-phosphoglycolate + (2R)-3-phosphoglycerate + 2 H(+). RuBisCO catalyzes two reactions: the carboxylation of D-ribulose 1,5-bisphosphate, the primary event in carbon dioxide fixation, as well as the oxidative fragmentation of the pentose substrate. Both reactions occur simultaneously and in competition at the same active site. The sequence is that of Ribulose bisphosphate carboxylase large chain, plasmid (cbbL2) from Cupriavidus necator (strain ATCC 17699 / DSM 428 / KCTC 22496 / NCIMB 10442 / H16 / Stanier 337) (Ralstonia eutropha).